A 64-amino-acid polypeptide reads, in one-letter code: Large ribosomal subunit protein bL35 (64 aa).

A compositionally biased stretch (basic residues) spans 1–15 (MPKNKTHSGASKRFR). The segment at 1 to 20 (MPKNKTHSGASKRFRVTGSG) is disordered.

It belongs to the bacterial ribosomal protein bL35 family.

The sequence is that of Large ribosomal subunit protein bL35 from Nocardioides sp. (strain ATCC BAA-499 / JS614).